The primary structure comprises 364 residues: Cobalt-precorrin-5B C(1)-methyltransferase (364 aa).

This sequence belongs to the CbiD family.

It carries out the reaction Co-precorrin-5B + S-adenosyl-L-methionine = Co-precorrin-6A + S-adenosyl-L-homocysteine. Its pathway is cofactor biosynthesis; adenosylcobalamin biosynthesis; cob(II)yrinate a,c-diamide from sirohydrochlorin (anaerobic route): step 6/10. Catalyzes the methylation of C-1 in cobalt-precorrin-5B to form cobalt-precorrin-6A. This is Cobalt-precorrin-5B C(1)-methyltransferase from Pseudomonas putida (strain W619).